The chain runs to 85 residues: uncharacterized protein (85 aa).

This is an uncharacterized protein from Mycobacterium tuberculosis (strain CDC 1551 / Oshkosh).